The sequence spans 1096 residues: Carbamoyl phosphate synthase large chain (1096 aa).

The segment at 1-402 (MPKRDDINSV…ALQKALRSLE (402 aa)) is carboxyphosphate synthetic domain. R129, R169, G175, G176, E208, I210, E215, G241, V242, H243, Q285, and E299 together coordinate ATP. The ATP-grasp 1 domain occupies 133–328 (KDLVIESGAD…IAKIAAKLAI (196 aa)). Positions 285, 299, and 301 each coordinate Mg(2+). 3 residues coordinate Mn(2+): Q285, E299, and N301. The segment at 403–547 (KRGSSFHWGP…YSSYDSETEI (145 aa)) is oligomerization domain. The segment at 548-950 (VPSDRRKVII…AFAKSQEAAF (403 aa)) is carbamoyl phosphate synthetic domain. The ATP-grasp 2 domain occupies 676–870 (SGILDTAGLV…LAKAASLVMV (195 aa)). ATP is bound by residues R712, R754, L756, E761, G786, I787, H788, S789, Q829, and E841. The Mg(2+) site is built by Q829, E841, and N843. Residues Q829, E841, and N843 each coordinate Mn(2+). The 145-residue stretch at 951-1095 (GGLPLSGTVF…QDYAIAREAR (145 aa)) folds into the MGS-like domain. Positions 951 to 1096 (GGLPLSGTVF…DYAIAREARR (146 aa)) are allosteric domain.

This sequence belongs to the CarB family. Composed of two chains; the small (or glutamine) chain promotes the hydrolysis of glutamine to ammonia, which is used by the large (or ammonia) chain to synthesize carbamoyl phosphate. Tetramer of heterodimers (alpha,beta)4. It depends on Mg(2+) as a cofactor. The cofactor is Mn(2+).

It carries out the reaction hydrogencarbonate + L-glutamine + 2 ATP + H2O = carbamoyl phosphate + L-glutamate + 2 ADP + phosphate + 2 H(+). The catalysed reaction is hydrogencarbonate + NH4(+) + 2 ATP = carbamoyl phosphate + 2 ADP + phosphate + 2 H(+). It participates in amino-acid biosynthesis; L-arginine biosynthesis; carbamoyl phosphate from bicarbonate: step 1/1. The protein operates within pyrimidine metabolism; UMP biosynthesis via de novo pathway; (S)-dihydroorotate from bicarbonate: step 1/3. Large subunit of the glutamine-dependent carbamoyl phosphate synthetase (CPSase). CPSase catalyzes the formation of carbamoyl phosphate from the ammonia moiety of glutamine, carbonate, and phosphate donated by ATP, constituting the first step of 2 biosynthetic pathways, one leading to arginine and/or urea and the other to pyrimidine nucleotides. The large subunit (synthetase) binds the substrates ammonia (free or transferred from glutamine from the small subunit), hydrogencarbonate and ATP and carries out an ATP-coupled ligase reaction, activating hydrogencarbonate by forming carboxy phosphate which reacts with ammonia to form carbamoyl phosphate. The protein is Carbamoyl phosphate synthase large chain of Clavibacter michiganensis subsp. michiganensis (strain NCPPB 382).